A 445-amino-acid chain; its full sequence is Rab GDP dissociation inhibitor beta (445 aa).

At Met-1 the chain carries N-acetylmethionine. Lys-57 carries the post-translational modification N6-succinyllysine. Lys-112 carries the N6-acetyllysine modification. At Ser-130 the chain carries Phosphoserine. At Lys-269 the chain carries N6-acetyllysine. At Ser-382 the chain carries Phosphoserine.

Belongs to the Rab GDI family. As to quaternary structure, interacts with RHOH. Interacts with the GDP-bound inactive forms of RAB3A, RAB3B, RAB3C, RAB5A, RAB5B, RAB5C, RAB8A, RAB8B, RAB10, RAB12, RAB35, and RAB43; binds RAB3D to a lesser extent. Interacts with DZIP1; this interaction negatively regulates the interaction of GDI2 with GDP-bound RAB8A.

The protein resides in the cytoplasm. It is found in the membrane. Its subcellular location is the golgi apparatus. The protein localises to the trans-Golgi network. In terms of biological role, GDP-dissociation inhibitor preventing the GDP to GTP exchange of most Rab proteins. By keeping these small GTPases in their inactive GDP-bound form regulates intracellular membrane trafficking. Negatively regulates protein transport to the cilium and ciliogenesis through the inhibition of RAB8A. The polypeptide is Rab GDP dissociation inhibitor beta (GDI2) (Canis lupus familiaris (Dog)).